A 409-amino-acid polypeptide reads, in one-letter code: Dihydroorotase (409 aa).

The Zn(2+) site is built by histidine 57 and histidine 59. Substrate-binding positions include 59–61 (HLR) and asparagine 91. Lysine 139, histidine 168, histidine 208, and aspartate 276 together coordinate Zn(2+). Residue lysine 139 is modified to N6-carboxylysine. Residue aspartate 276 is part of the active site. Substrate contacts are provided by residues histidine 280 and 290–291 (AG).

It belongs to the metallo-dependent hydrolases superfamily. DHOase family. Class I DHOase subfamily. Requires Zn(2+) as cofactor.

It carries out the reaction (S)-dihydroorotate + H2O = N-carbamoyl-L-aspartate + H(+). The protein operates within pyrimidine metabolism; UMP biosynthesis via de novo pathway; (S)-dihydroorotate from bicarbonate: step 3/3. Its function is as follows. Catalyzes the reversible cyclization of carbamoyl aspartate to dihydroorotate. The protein is Dihydroorotase of Thermococcus kodakarensis (strain ATCC BAA-918 / JCM 12380 / KOD1) (Pyrococcus kodakaraensis (strain KOD1)).